The sequence spans 485 residues: Glutamyl-tRNA(Gln) amidotransferase subunit A (485 aa).

Residues K78 and S153 each act as charge relay system in the active site. S177 (acyl-ester intermediate) is an active-site residue.

The protein belongs to the amidase family. GatA subfamily. Heterotrimer of A, B and C subunits.

The enzyme catalyses L-glutamyl-tRNA(Gln) + L-glutamine + ATP + H2O = L-glutaminyl-tRNA(Gln) + L-glutamate + ADP + phosphate + H(+). Its function is as follows. Allows the formation of correctly charged Gln-tRNA(Gln) through the transamidation of misacylated Glu-tRNA(Gln) in organisms which lack glutaminyl-tRNA synthetase. The reaction takes place in the presence of glutamine and ATP through an activated gamma-phospho-Glu-tRNA(Gln). In Trichlorobacter lovleyi (strain ATCC BAA-1151 / DSM 17278 / SZ) (Geobacter lovleyi), this protein is Glutamyl-tRNA(Gln) amidotransferase subunit A.